Consider the following 267-residue polypeptide: Indole-3-glycerol phosphate synthase (267 aa).

The protein belongs to the TrpC family.

It carries out the reaction 1-(2-carboxyphenylamino)-1-deoxy-D-ribulose 5-phosphate + H(+) = (1S,2R)-1-C-(indol-3-yl)glycerol 3-phosphate + CO2 + H2O. It participates in amino-acid biosynthesis; L-tryptophan biosynthesis; L-tryptophan from chorismate: step 4/5. The polypeptide is Indole-3-glycerol phosphate synthase (Polynucleobacter asymbioticus (strain DSM 18221 / CIP 109841 / QLW-P1DMWA-1) (Polynucleobacter necessarius subsp. asymbioticus)).